Consider the following 758-residue polypeptide: Meiotic driver SPOK4 (758 aa).

Positions 4-41 (KDRITQLLRKLEEAKAREEEAKAREAQERCEKERLQLE) form a coiled coil. 2 disordered regions span residues 180 to 230 (ELTQ…GVGI) and 414 to 499 (LSSA…MADP). Basic and acidic residues predominate over residues 181–190 (LTQEDDRSSG). The segment covering 416–429 (SAASSQNTENSEYT) has biased composition (polar residues). The segment covering 457-468 (NEHDEHDEDHSE) has biased composition (basic and acidic residues).

Its subcellular location is the cytoplasm. It is found in the nucleus. Promotes unequal transmission of alleles from the parental zygote to progeny spores by acting as poison/antidote system, leading to poisoning of progeny that do not inherit the allele. May possess DNA nuclease activity that leads to spore killing, and a kinase activity that confers resistance to the nuclease activity. Can suppress meiotic drive by the P.comata SPOK1 protein. In Podospora anserina (Pleurage anserina), this protein is Meiotic driver SPOK4.